The primary structure comprises 320 residues: Ferrochelatase (320 aa).

Residues histidine 194 and glutamate 275 each coordinate Fe cation.

The protein belongs to the ferrochelatase family.

Its subcellular location is the cytoplasm. The enzyme catalyses heme b + 2 H(+) = protoporphyrin IX + Fe(2+). Its pathway is porphyrin-containing compound metabolism; protoheme biosynthesis; protoheme from protoporphyrin-IX: step 1/1. Functionally, catalyzes the ferrous insertion into protoporphyrin IX. The chain is Ferrochelatase from Yersinia pestis bv. Antiqua (strain Antiqua).